The sequence spans 218 residues: 2-C-methyl-D-erythritol 4-phosphate cytidylyltransferase (218 aa).

Belongs to the IspD/TarI cytidylyltransferase family. IspD subfamily.

The catalysed reaction is 2-C-methyl-D-erythritol 4-phosphate + CTP + H(+) = 4-CDP-2-C-methyl-D-erythritol + diphosphate. It participates in isoprenoid biosynthesis; isopentenyl diphosphate biosynthesis via DXP pathway; isopentenyl diphosphate from 1-deoxy-D-xylulose 5-phosphate: step 2/6. Its function is as follows. Catalyzes the formation of 4-diphosphocytidyl-2-C-methyl-D-erythritol from CTP and 2-C-methyl-D-erythritol 4-phosphate (MEP). This chain is 2-C-methyl-D-erythritol 4-phosphate cytidylyltransferase, found in Chlamydia muridarum (strain MoPn / Nigg).